A 217-amino-acid polypeptide reads, in one-letter code: N-(5'-phosphoribosyl)anthranilate isomerase (217 aa).

This sequence belongs to the TrpF family.

It carries out the reaction N-(5-phospho-beta-D-ribosyl)anthranilate = 1-(2-carboxyphenylamino)-1-deoxy-D-ribulose 5-phosphate. Its pathway is amino-acid biosynthesis; L-tryptophan biosynthesis; L-tryptophan from chorismate: step 3/5. In Synechococcus sp. (strain ATCC 27144 / PCC 6301 / SAUG 1402/1) (Anacystis nidulans), this protein is N-(5'-phosphoribosyl)anthranilate isomerase.